The sequence spans 315 residues: Beta-ketoacyl-[acyl-carrier-protein] synthase III (315 aa).

Catalysis depends on residues cysteine 115 and histidine 244. The tract at residues 245 to 249 (QANAR) is ACP-binding. Residue asparagine 274 is part of the active site.

It belongs to the thiolase-like superfamily. FabH family. Homodimer.

The protein localises to the cytoplasm. It catalyses the reaction malonyl-[ACP] + acetyl-CoA + H(+) = 3-oxobutanoyl-[ACP] + CO2 + CoA. It functions in the pathway lipid metabolism; fatty acid biosynthesis. Functionally, catalyzes the condensation reaction of fatty acid synthesis by the addition to an acyl acceptor of two carbons from malonyl-ACP. Catalyzes the first condensation reaction which initiates fatty acid synthesis and may therefore play a role in governing the total rate of fatty acid production. Possesses both acetoacetyl-ACP synthase and acetyl transacylase activities. Its substrate specificity determines the biosynthesis of branched-chain and/or straight-chain of fatty acids. This chain is Beta-ketoacyl-[acyl-carrier-protein] synthase III, found in Rubrobacter xylanophilus (strain DSM 9941 / JCM 11954 / NBRC 16129 / PRD-1).